The primary structure comprises 309 residues: Ferredoxin--NADP reductase (309 aa).

7 residues coordinate FAD: aspartate 25, glutamine 33, tyrosine 38, valine 77, phenylalanine 107, aspartate 267, and threonine 307.

It belongs to the ferredoxin--NADP reductase type 2 family. As to quaternary structure, homodimer. Requires FAD as cofactor.

The enzyme catalyses 2 reduced [2Fe-2S]-[ferredoxin] + NADP(+) + H(+) = 2 oxidized [2Fe-2S]-[ferredoxin] + NADPH. The sequence is that of Ferredoxin--NADP reductase from Lactobacillus acidophilus (strain ATCC 700396 / NCK56 / N2 / NCFM).